The sequence spans 531 residues: Isocitrate lyase (531 aa).

101–103 (SGW) contributes to the substrate binding site. A Mg(2+)-binding site is contributed by Asp184. Cys222 (proton acceptor) is an active-site residue. Residues 223–224 (GH), 380–384 (NNSPS), and Thr451 each bind substrate.

This sequence belongs to the isocitrate lyase/PEP mutase superfamily. Isocitrate lyase family. As to quaternary structure, homotetramer. Mg(2+) is required as a cofactor.

It carries out the reaction D-threo-isocitrate = glyoxylate + succinate. It functions in the pathway carbohydrate metabolism; glyoxylate cycle; (S)-malate from isocitrate: step 1/2. In terms of biological role, involved in the metabolic adaptation in response to environmental changes. Catalyzes the reversible formation of succinate and glyoxylate from isocitrate, a key step of the glyoxylate cycle, which operates as an anaplerotic route for replenishing the tricarboxylic acid cycle during growth on fatty acid substrates. The polypeptide is Isocitrate lyase (Pseudomonas aeruginosa (strain ATCC 15692 / DSM 22644 / CIP 104116 / JCM 14847 / LMG 12228 / 1C / PRS 101 / PAO1)).